The sequence spans 863 residues: DNA-directed RNA polymerase subunit beta' (863 aa).

The tract at residues 1–83 is disordered; that stretch reads MSGEVAQDQP…SKKKETKASQ (83 aa). A compositionally biased stretch (polar residues) spans 23–36; that stretch reads EIVNSAITVQSSAK. Residues Cys-159, Cys-161, Cys-180, and Cys-183 each coordinate Zn(2+). Mg(2+)-binding residues include Asp-621, Asp-623, and Asp-625.

Belongs to the RNA polymerase beta' chain family. RpoC1 subfamily. As to quaternary structure, in plastids the minimal PEP RNA polymerase catalytic core is composed of four subunits: alpha, beta, beta', and beta''. When a (nuclear-encoded) sigma factor is associated with the core the holoenzyme is formed, which can initiate transcription. The cofactor is Mg(2+). Zn(2+) is required as a cofactor.

It is found in the plastid. Its subcellular location is the chloroplast. It catalyses the reaction RNA(n) + a ribonucleoside 5'-triphosphate = RNA(n+1) + diphosphate. Its function is as follows. DNA-dependent RNA polymerase catalyzes the transcription of DNA into RNA using the four ribonucleoside triphosphates as substrates. The polypeptide is DNA-directed RNA polymerase subunit beta' (Nephroselmis olivacea (Green alga)).